Here is a 266-residue protein sequence, read N- to C-terminus: Putative carbamate hydrolase RutD (266 aa).

It belongs to the AB hydrolase superfamily. Hydrolase RutD family.

It catalyses the reaction carbamate + 2 H(+) = NH4(+) + CO2. Functionally, involved in pyrimidine catabolism. May facilitate the hydrolysis of carbamate, a reaction that can also occur spontaneously. This Escherichia coli O157:H7 protein is Putative carbamate hydrolase RutD.